The following is a 142-amino-acid chain: Protein SprT-like (142 aa).

One can recognise a SprT-like domain in the interval tyrosine 4 to leucine 138. A Zn(2+)-binding site is contributed by histidine 62. The active site involves glutamate 63. Histidine 66 lines the Zn(2+) pocket.

This sequence belongs to the SprT family. Zn(2+) serves as cofactor.

The protein localises to the cytoplasm. The chain is Protein SprT-like from Streptococcus agalactiae serotype Ia (strain ATCC 27591 / A909 / CDC SS700).